Here is a 210-residue protein sequence, read N- to C-terminus: Rho-related GTP-binding protein RhoD (210 aa).

24 to 31 (GDGGCGKT) serves as a coordination point for GTP. An Effector region motif is present at residues 46–54 (YTPTVFERY). GTP contacts are provided by residues 71–75 (DTAGQ) and 129–132 (CKTD). At Cys207 the chain carries Cysteine methyl ester. The S-geranylgeranyl cysteine moiety is linked to residue Cys207. Positions 208 to 210 (VVT) are cleaved as a propeptide — removed in mature form.

The protein belongs to the small GTPase superfamily. Rho family. As to quaternary structure, interacts (in GTP-bound form) with DIAPH2 isoform 3, DAPK3, FILIP1 and WHAMM. Interacts with PAK5. Interacts (independent of GTP-loaded status) with ANKFY1. In terms of tissue distribution, heart, placenta, liver, skeletal muscle, and pancreas and, with weaker intensity, in several other tissues.

It localises to the cell membrane. It is found in the early endosome. Functionally, involved in endosome dynamics. May coordinate membrane transport with the function of the cytoskeleton. Involved in the internalization and trafficking of activated tyrosine kinase receptors such as PDGFRB. Participates in the reorganization of actin cytoskeleton; the function seems to involve WHAMM and includes regulation of filopodia formation and actin filament bundling. Can modulate the effect of DAPK3 in reorganization of actin cytoskeleton and focal adhesion dissolution. This chain is Rho-related GTP-binding protein RhoD, found in Homo sapiens (Human).